The following is a 252-amino-acid chain: RNA-binding protein 7 (252 aa).

The region spanning 9 to 86 is the RRM domain; sequence RTLFVGNLDP…RQLNIKFKTG (78 aa). Polar residues-rich tracts occupy residues 88 to 107 and 119 to 137; these read SHIN…SPAN and QMGS…PFSS. 2 disordered regions span residues 88-137 and 171-252; these read SHIN…PFSS and QLRG…WKHF. Composition is skewed to basic and acidic residues over residues 211-230 and 237-252; these read ERNR…DRSG and PPDR…WKHF.

In terms of assembly, component of the nuclear exosome targeting (NEXT) complex composed of MTREX, ZCCHC8, and RBM7 that directs a subset of non-coding short-lived RNAs for exosomal degradation.

It is found in the nucleus. The protein resides in the nucleoplasm. Functionally, RNA-binding subunit of the trimeric nuclear exosome targeting (NEXT) complex, a complex that functions as an RNA exosome cofactor that directs a subset of non-coding short-lived RNAs for exosomal degradation. NEXT is involved in surveillance and turnover of aberrant transcripts and non-coding RNAs. Binds preferentially polyuridine sequences and associates with newly synthesized RNAs, including pre-mRNAs and short-lived exosome substrates such as promoter upstream transcripts (PROMPTs), enhancer RNAs (eRNAs), and 3'-extended products from small nuclear RNAs (snRNAs). The chain is RNA-binding protein 7 from Danio rerio (Zebrafish).